We begin with the raw amino-acid sequence, 190 residues long: Elongation factor P-like protein (190 aa).

This sequence belongs to the elongation factor P family.

The sequence is that of Elongation factor P-like protein from Shigella dysenteriae serotype 1 (strain Sd197).